We begin with the raw amino-acid sequence, 492 residues long: ATP synthase subunit beta, chloroplastic (492 aa).

170–177 provides a ligand contact to ATP; sequence GGAGVGKT.

This sequence belongs to the ATPase alpha/beta chains family. In terms of assembly, F-type ATPases have 2 components, CF(1) - the catalytic core - and CF(0) - the membrane proton channel. CF(1) has five subunits: alpha(3), beta(3), gamma(1), delta(1), epsilon(1). CF(0) has four main subunits: a(1), b(1), b'(1) and c(9-12).

Its subcellular location is the plastid. The protein resides in the chloroplast thylakoid membrane. It catalyses the reaction ATP + H2O + 4 H(+)(in) = ADP + phosphate + 5 H(+)(out). Functionally, produces ATP from ADP in the presence of a proton gradient across the membrane. The catalytic sites are hosted primarily by the beta subunits. This chain is ATP synthase subunit beta, chloroplastic, found in Anthoceros angustus (Hornwort).